The primary structure comprises 1754 residues: Probable outer membrane protein PmpB (1754 aa).

An N-terminal signal peptide occupies residues 1 to 14 (MSSMKWLSATAVFA). Composition is skewed to low complexity over residues 68–105 (NIPTTDTTTPTNSNSSSSNGETASVSEDSDSTTTTPDP) and 212–232 (SETSGSSSSSGNDSVSSPSSS). 6 disordered regions span residues 68–109 (NIPT…KGGG), 190–235 (SSNS…SRAE), 252–271 (PAAQTDTETSTPSHKPGSGG), 397–438 (NADA…ATAK), 621–668 (AAEN…STPS), and 1299–1332 (TSSASGGSGVSSSIPTNPKRISAAAPSGSAATTP). 2 stretches are compositionally biased toward polar residues: residues 252 to 264 (PAAQTDTETSTPS) and 402 to 412 (ASSSPQSGSGA). Composition is skewed to low complexity over residues 413 to 427 (TTVSNSGDSSSGSDS), 636 to 668 (PTADTAEQPAAASAATSTPESAPVVSTALSTPS), 1299 to 1311 (TSSASGGSGVSSS), and 1320 to 1332 (SAAAPSGSAATTP). The Autotransporter domain occupies 1461–1754 (DDIAYNNFWV…MTSCGARMIF (294 aa)).

This sequence belongs to the PMP outer membrane protein family.

It is found in the secreted. It localises to the cell wall. The protein localises to the cell outer membrane. In Chlamydia trachomatis serovar D (strain ATCC VR-885 / DSM 19411 / UW-3/Cx), this protein is Probable outer membrane protein PmpB (pmpB).